A 383-amino-acid polypeptide reads, in one-letter code: MLSRKKTKNEVSKPAEVQGKYVKKETSPLLRNLMPSFIRHGPTIPRRTDICLPDSSPNAFSTSGDVVSRNQSFLRTPIQRTPHEIMRRESNRLSAPSYLARSLADVPREYGSSQSFVTEVSFAVENGDSGSRYYYSDNFFDGQRKRPLGDRAHEDYRYYEYNHDLFQRMPQNQGRHASGIGRVAATSLGNLTNHGSEDLPLPPGWSVDWTMRGRKYYIDHNTNTTHWSHPLEREGLPPGWERVESSEFGTYYVDHTNKKAQYRHPCAPSVPRYDQPPPVTYQPQQTERNQSLLVPANPYHTAEIPDWLQVYARAPVKYDHILKWELFQLADLDTYQGMLKLLFMKELEQIVKMYEAYRQALLTELENRKQRQQWYAQQHGKNF.

Phosphoserine occurs at positions 94 and 136. 2 consecutive WW domains span residues 199–232 (LPLP…HPLE) and 234–267 (EGLP…HPCA). Phosphothreonine is present on Thr-210. The SARAH domain occupies 321 to 368 (ILKWELFQLADLDTYQGMLKLLFMKELEQIVKMYEAYRQALLTELENR). The stretch at 344 to 373 (MKELEQIVKMYEAYRQALLTELENRKQRQQ) forms a coiled coil.

Homodimer. Stabilized through interaction with STK3/MST2 or STK4/MST1. Interacts (via SARAH domain) with isoform 1 of NEK2. Interacts with ESR1 only in the presence of STK3/MST2. Interacts with WTIP and AJUBA. In terms of processing, phosphorylated by STK3/MST2 and STK4/MST1. Phosphorylation is not required for SAV1 stability and may increase the number of protein binding sites on the scaffold molecule. Ubiquitously expressed in adult tissues with highest expression in the pancreas, aorta and interventricular septum and lowest expression in skeletal muscle. Expression was higher in fetal than in the adult heart. Expressed in various cell lines.

The protein resides in the nucleus. It localises to the cytoplasm. Regulator of STK3/MST2 and STK4/MST1 in the Hippo signaling pathway which plays a pivotal role in organ size control and tumor suppression by restricting proliferation and promoting apoptosis. The core of this pathway is composed of a kinase cascade wherein STK3/MST2 and STK4/MST1, in complex with its regulatory protein SAV1, phosphorylates and activates LATS1/2 in complex with its regulatory protein MOB1, which in turn phosphorylates and inactivates YAP1 oncoprotein and WWTR1/TAZ. Phosphorylation of YAP1 by LATS1/2 inhibits its translocation into the nucleus to regulate cellular genes important for cell proliferation, cell death, and cell migration. SAV1 is required for STK3/MST2 and STK4/MST1 activation and promotes cell-cycle exit and terminal differentiation in developing epithelial tissues. Plays a role in centrosome disjunction by regulating the localization of NEK2 to centrosomes, and its ability to phosphorylate CROCC and CEP250. In conjunction with STK3/MST2, activates the transcriptional activity of ESR1 through the modulation of its phosphorylation. This is Protein salvador homolog 1 from Homo sapiens (Human).